A 159-amino-acid polypeptide reads, in one-letter code: MAGSGVLEVHLVDAKGLTGNDFLGEIGKIDPYVVVQYRSQERKSSVARDQGKNPSWNEVFKFQINSTAATGQHKLFLRLMDHDTFSRDDFLGEATINVTDLISLGMEHGTWEMSESKHRVVLADKTYHGEIRVSLTFTASAKAQDHAEQVGGWAHSFRQ.

A C2 domain is found at 1–112 (MAGSGVLEVH…SLGMEHGTWE (112 aa)). Residues aspartate 21 and aspartate 30 each coordinate Ca(2+). A Phosphoserine; by CPK modification is found at serine 44. Ca(2+)-binding residues include aspartate 81, aspartate 83, serine 86, and aspartate 89.

Requires Ca(2+) as cofactor. In terms of processing, phosphorylated at Ser-44 by CPK18 in a calcium-dependent manner. Isoform 2 is expressed in young vascular tissues and tiller buds.

The protein localises to the cytoplasm. It localises to the cell membrane. May play a role in plant defense signaling. Isoform 2 binds to phospholipids in a Ca(2+)-dependent manner in response to pathogen elicitors. The chain is Elicitor-responsive protein 1 (ERG1) from Oryza sativa subsp. japonica (Rice).